The sequence spans 504 residues: MQQSTPYLSFRGIGKTFPGVKALTDISFDCYAGQVHALMGENGAGKSTLLKILSGNYAPTTGSVVINGQEMSFSDTTAALNAGVAIIYQELHLVPEMTVAENIYLGQLPHKGGIVNRSLLNYEAGLQLKHLGMDIDPDTPLKYLSIGQWQMVEIAKALARNAKIIAFDEPTSSLSAREIDNLFRVIRELRKEGRVILYVSHRMEEIFALSDAITVFKDGRYVKTFTDMQQVDHDALVQAMVGRDIGDIYGWQPRSYGEERLRLDAVKAPGVRTPISLAVRSGEIVGLFGLVGAGRSELMKGLFGGTQITAGQVYIDQQPIDIRKPSHAIAAGMMLCPEDRKAEGIIPVHSVRDNINISARRKHVLGGCVINNGWEENNADQHIRSLNIKTPGAEQLIMNLSGGNQQKAILGRWLSEEMKVILLDEPTRGIDVGAKHEIYNVIYALAAQGVAVLFASSDLPEVLGVADRIVVMREGEIAGELLHEQADERQALSLAMPKVSQAVA.

2 consecutive ABC transporter domains span residues 8 to 243 (LSFR…MVGR) and 256 to 499 (YGEE…MPKV). 40 to 47 (GENGAGKS) is an ATP binding site.

The protein belongs to the ABC transporter superfamily. Arabinose importer (TC 3.A.1.2.2) family. As to quaternary structure, the complex is composed of two ATP-binding proteins (AraG), two transmembrane proteins (AraH) and a solute-binding protein (AraF).

It localises to the cell inner membrane. It carries out the reaction L-arabinose(out) + ATP + H2O = L-arabinose(in) + ADP + phosphate + H(+). In terms of biological role, part of the ABC transporter complex AraFGH involved in arabinose import. Responsible for energy coupling to the transport system. This chain is Arabinose import ATP-binding protein AraG, found in Shigella boydii serotype 4 (strain Sb227).